The following is a 351-amino-acid chain: ATP-dependent 6-phosphofructokinase subunit gamma (351 aa).

As to quaternary structure, heterododecamer of 4 alpha, 4 beta and 4 gamma chains. The gamma chain bridges the N-terminal halves of the alpha and beta subunits.

Its subcellular location is the cytoplasm. It participates in carbohydrate degradation; glycolysis; D-glyceraldehyde 3-phosphate and glycerone phosphate from D-glucose: step 3/4. Functionally, structural subunit of pyrophosphate--fructose 6-phosphate 1-phosphotransferase. Not required for catalytic activity. Fine-tunes allosteric regulation of the ATP-PFK by ATP, fructose 2,6-bisphosphate and AMP. The polypeptide is ATP-dependent 6-phosphofructokinase subunit gamma (PFK3) (Komagataella phaffii (strain GS115 / ATCC 20864) (Yeast)).